Here is a 62-residue protein sequence, read N- to C-terminus: Small ribosomal subunit protein bS21 (62 aa).

Residues 43–52 (VKKKLKSEAA) show a composition bias toward basic and acidic residues. The interval 43–62 (VKKKLKSEAARKRKNRRRFK) is disordered. Positions 53-62 (RKRKNRRRFK) are enriched in basic residues.

Belongs to the bacterial ribosomal protein bS21 family.

This chain is Small ribosomal subunit protein bS21, found in Lactiplantibacillus plantarum (strain ATCC BAA-793 / NCIMB 8826 / WCFS1) (Lactobacillus plantarum).